A 550-amino-acid polypeptide reads, in one-letter code: Glucose-6-phosphate isomerase 2 (550 aa).

Catalysis depends on glutamate 357, which acts as the Proton donor. Residues histidine 388 and lysine 514 contribute to the active site. Residues aspartate 527 to lysine 550 are disordered.

The protein belongs to the GPI family.

Its subcellular location is the cytoplasm. It carries out the reaction alpha-D-glucose 6-phosphate = beta-D-fructose 6-phosphate. It participates in carbohydrate biosynthesis; gluconeogenesis. It functions in the pathway carbohydrate degradation; glycolysis; D-glyceraldehyde 3-phosphate and glycerone phosphate from D-glucose: step 2/4. Functionally, catalyzes the reversible isomerization of glucose-6-phosphate to fructose-6-phosphate. The protein is Glucose-6-phosphate isomerase 2 of Chromobacterium violaceum (strain ATCC 12472 / DSM 30191 / JCM 1249 / CCUG 213 / NBRC 12614 / NCIMB 9131 / NCTC 9757 / MK).